A 410-amino-acid chain; its full sequence is Aspartate aminotransferase (410 aa).

3 residues coordinate L-aspartate: G47, W135, and N185. K249 carries the N6-(pyridoxal phosphate)lysine modification. R385 is a binding site for L-aspartate.

Belongs to the class-I pyridoxal-phosphate-dependent aminotransferase family. In terms of assembly, homodimer. Pyridoxal 5'-phosphate serves as cofactor.

The protein resides in the cytoplasm. It carries out the reaction L-aspartate + 2-oxoglutarate = oxaloacetate + L-glutamate. Functionally, catalyzes the reversible conversion of aspartate and 2-oxoglutarate to glutamate and oxaloacetate. The chain is Aspartate aminotransferase from Rhizobium meliloti (Ensifer meliloti).